The sequence spans 328 residues: E3 ubiquitin-protein ligase RING1-like (328 aa).

Ser2 carries the post-translational modification N-acetylserine. The RING-type; atypical zinc-finger motif lies at 216–257 (CAVCMDEFEDGSDVKQMPCKHVFHQDCLLPWLELHNSCPVCR). The segment at 264–328 (DPDYENRSQG…NLETRGEDLD (65 aa)) is disordered. Gly residues predominate over residues 306–319 (SGSGSGAPGTGGGN).

Post-translationally, auto-ubiquitinated as part of the enzymatic reaction. Expressed in leaves, roots, trichomes, stipules, and also in anthers and stigma of flowers.

It carries out the reaction S-ubiquitinyl-[E2 ubiquitin-conjugating enzyme]-L-cysteine + [acceptor protein]-L-lysine = [E2 ubiquitin-conjugating enzyme]-L-cysteine + N(6)-ubiquitinyl-[acceptor protein]-L-lysine.. It participates in protein modification; protein ubiquitination. Its function is as follows. E3 ubiquitin-protein ligase which accepts ubiquitin from an E2 ubiquitin-conjugating enzyme in the form of a thioester and then directly transfers the ubiquitin to targeted substrates. Promotes polyubiquitination of target proteins. This chain is E3 ubiquitin-protein ligase RING1-like, found in Arabidopsis thaliana (Mouse-ear cress).